A 245-amino-acid chain; its full sequence is tRNA pseudouridine synthase A (245 aa).

Residue aspartate 52 is the Nucleophile of the active site. A substrate-binding site is contributed by tyrosine 111.

The protein belongs to the tRNA pseudouridine synthase TruA family. In terms of assembly, homodimer.

It carries out the reaction uridine(38/39/40) in tRNA = pseudouridine(38/39/40) in tRNA. Functionally, formation of pseudouridine at positions 38, 39 and 40 in the anticodon stem and loop of transfer RNAs. This is tRNA pseudouridine synthase A from Ehrlichia canis (strain Jake).